Reading from the N-terminus, the 454-residue chain is MAAKPGIPKGTRDFSPVEMAKRNYIFNTIRDVYHLYGFQQIETPSMEMLSTLMGKYGEEGDKLLFKIQNSGNYFSGITDEELLSRNAAKLASKFCEKGLRYDLTVPFARYVVMHRDEITFPFKRYQIQPVWRADRPQKGRYREFYQCDADVVGSDSLLNEVELMQIVDTVFTRFGIRVCIKINNRKILTGIAEIIGEADKIVDITVAIDKLDKIGLDNVNKELAEKGISGEAIAKLQPIILLSGTNAEKLATLKTVLSDSETGLKGVEESEFILNTLQTMGLKNEIELDLTLARGLNYYTGAIFEVKALDVQIGSITGGGRYDNLTGVFGMAGVSGVGISFGADRIFDVLNQLELYPKEAVNGTQLLFINFGEKEAAFSMGILSKARAAGIRAEIFPDAAKMKKQMSYANVKNIPFVAIVGENEMNEGKAMLKNMESGEQQLVTAEELIGALTK.

This sequence belongs to the class-II aminoacyl-tRNA synthetase family. As to quaternary structure, homodimer.

It is found in the cytoplasm. The catalysed reaction is tRNA(His) + L-histidine + ATP = L-histidyl-tRNA(His) + AMP + diphosphate + H(+). In Bacteroides fragilis (strain ATCC 25285 / DSM 2151 / CCUG 4856 / JCM 11019 / LMG 10263 / NCTC 9343 / Onslow / VPI 2553 / EN-2), this protein is Histidine--tRNA ligase.